The chain runs to 288 residues: Putative alkaline ceramidase dcd3A (288 aa).

Asparagine 23 is a glycosylation site (N-linked (GlcNAc...) asparagine). The next 7 helical transmembrane spans lie at isoleucine 41 to valine 61, valine 78 to threonine 98, leucine 105 to valine 125, histidine 146 to isoleucine 166, isoleucine 172 to isoleucine 192, serine 206 to glutamate 226, and leucine 240 to isoleucine 260.

The protein belongs to the alkaline ceramidase family.

The protein localises to the membrane. The sequence is that of Putative alkaline ceramidase dcd3A (dcd3A) from Dictyostelium discoideum (Social amoeba).